We begin with the raw amino-acid sequence, 217 residues long: Small ribosomal subunit protein eS6 (217 aa).

The protein belongs to the eukaryotic ribosomal protein eS6 family.

This chain is Small ribosomal subunit protein eS6, found in Hyperthermus butylicus (strain DSM 5456 / JCM 9403 / PLM1-5).